The chain runs to 725 residues: Polyribonucleotide nucleotidyltransferase (725 aa).

Asp-488 and Asp-494 together coordinate Mg(2+). In terms of domain architecture, KH spans 555–614 (PRMITMKIHPDKIREVIGKGGSTIQALTKETGTTIDIQEDGTITIASTSTDGMAEAKRRI). The region spanning 624-692 (GKIYAGTVLK…EKGRLRLSLK (69 aa)) is the S1 motif domain. The segment at 702–725 (ISPIAQGDAPAAAPAAPASPDQQQ) is disordered. The segment covering 706–725 (AQGDAPAAAPAAPASPDQQQ) has biased composition (low complexity).

It belongs to the polyribonucleotide nucleotidyltransferase family. The cofactor is Mg(2+).

It localises to the cytoplasm. It catalyses the reaction RNA(n+1) + phosphate = RNA(n) + a ribonucleoside 5'-diphosphate. In terms of biological role, involved in mRNA degradation. Catalyzes the phosphorolysis of single-stranded polyribonucleotides processively in the 3'- to 5'-direction. In Cupriavidus metallidurans (strain ATCC 43123 / DSM 2839 / NBRC 102507 / CH34) (Ralstonia metallidurans), this protein is Polyribonucleotide nucleotidyltransferase.